The chain runs to 274 residues: uncharacterized protein (274 aa).

This is an uncharacterized protein from Methanocaldococcus jannaschii (strain ATCC 43067 / DSM 2661 / JAL-1 / JCM 10045 / NBRC 100440) (Methanococcus jannaschii).